The sequence spans 406 residues: Vacuole membrane protein 1 (406 aa).

The segment covering 1-20 (MAENGKNCDQRRVAMNKEQH) has biased composition (basic and acidic residues). Positions 1–36 (MAENGKNCDQRRVAMNKEQHNGNFTDPSSVNEKKRR) are disordered. A2 bears the N-acetylalanine mark. Topologically, residues 2–43 (AENGKNCDQRRVAMNKEQHNGNFTDPSSVNEKKRREREERQN) are cytoplasmic. Positions 21-30 (NGNFTDPSSV) are enriched in polar residues. The helical transmembrane segment at 44-64 (IVLWRQPLITLQYFSLEILVI) threads the bilayer. Residues 65–77 (LKEWTSKLWHRQS) lie on the Extracellular side of the membrane. A helical membrane pass occupies residues 78–98 (IVVSFLLLLAVLIATYYVEGA). Over 99-109 (HQQYVQRIEKQ) the chain is Cytoplasmic. The helical transmembrane segment at 110 to 130 (FLLYAYWIGLGILSSVGLGTG) threads the bilayer. Over 131-250 (LHTFLLYLGP…ASRAKLAVQK (120 aa)) the chain is Extracellular. Residues 173–316 (GTEGTISLWS…FVIITFSKHI (144 aa)) form a VTT domain region. The chain crosses the membrane as a helical span at residues 251–271 (LVQKVGFFGILACASIPNPLF). Residues 272-273 (DL) are Cytoplasmic-facing. A helical transmembrane segment spans residues 274–294 (AGITCGHFLVPFWTFFGATLI). At 295–305 (GKAIIKMHIQK) the chain is on the extracellular side. The helical transmembrane segment at 306 to 326 (IFVIITFSKHIVEQMVAFIGA) threads the bilayer. At 327–363 (VPGIGPSLQKPFQEYLEAQRQKLHHKSEMGTPQGENW) the chain is on the cytoplasmic side. A helical membrane pass occupies residues 364-384 (LSWMFEKLVVVMVCYFILSII). Residues 385 to 406 (NSMAQSYAKRIQQRLNSEEKTK) lie on the Extracellular side of the membrane.

Belongs to the VMP1 family. As to quaternary structure, interacts with BECN1. Interacts with TJP1. Interacts with TP53INP2. Interacts with TMEM41B. Interacts with ATP2A2, PLN and SLN; competes with PLN and SLN to prevent them from forming an inhibitory complex with ATP2A2. Interacts with ATG2A.

Its subcellular location is the endoplasmic reticulum-Golgi intermediate compartment membrane. It is found in the cell membrane. The protein resides in the vacuole membrane. The protein localises to the endoplasmic reticulum membrane. It carries out the reaction a 1,2-diacyl-sn-glycero-3-phospho-L-serine(in) = a 1,2-diacyl-sn-glycero-3-phospho-L-serine(out). The catalysed reaction is cholesterol(in) = cholesterol(out). It catalyses the reaction a 1,2-diacyl-sn-glycero-3-phosphocholine(in) = a 1,2-diacyl-sn-glycero-3-phosphocholine(out). The enzyme catalyses a 1,2-diacyl-sn-glycero-3-phosphoethanolamine(in) = a 1,2-diacyl-sn-glycero-3-phosphoethanolamine(out). Its function is as follows. Phospholipid scramblase involved in lipid homeostasis and membrane dynamics processes. Has phospholipid scramblase activity toward cholesterol and phosphatidylserine, as well as phosphatidylethanolamine and phosphatidylcholine. Required for autophagosome formation: participates in early stages of autophagosome biogenesis at the endoplasmic reticulum (ER) membrane by reequilibrating the leaflets of the ER as lipids are extracted by ATG2 (ATG2A or ATG2B) to mediate autophagosome assembly. Regulates ATP2A2 activity to control ER-isolation membrane contacts for autophagosome formation. In addition to autophagy, involved in other processes in which phospholipid scramblase activity is required. Modulates ER contacts with lipid droplets, mitochondria and endosomes. Plays an essential role in formation of cell junctions. Upon stress such as bacterial and viral infection, promotes formation of cytoplasmic vacuoles followed by cell death. Involved in the cytoplasmic vacuolization of acinar cells during the early stage of acute pancreatitis. This is Vacuole membrane protein 1 from Pongo abelii (Sumatran orangutan).